The following is a 200-amino-acid chain: ATP-dependent Clp protease proteolytic subunit (200 aa).

The active-site Nucleophile is Ser-101. The active site involves His-126.

This sequence belongs to the peptidase S14 family. As to quaternary structure, component of the chloroplastic Clp protease core complex.

The protein localises to the plastid. The protein resides in the chloroplast stroma. The enzyme catalyses Hydrolysis of proteins to small peptides in the presence of ATP and magnesium. alpha-casein is the usual test substrate. In the absence of ATP, only oligopeptides shorter than five residues are hydrolyzed (such as succinyl-Leu-Tyr-|-NHMec, and Leu-Tyr-Leu-|-Tyr-Trp, in which cleavage of the -Tyr-|-Leu- and -Tyr-|-Trp bonds also occurs).. Its function is as follows. Cleaves peptides in various proteins in a process that requires ATP hydrolysis. Has a chymotrypsin-like activity. Plays a major role in the degradation of misfolded proteins. The sequence is that of ATP-dependent Clp protease proteolytic subunit from Adiantum capillus-veneris (Maidenhair fern).